The following is a 637-amino-acid chain: MQNYKFLKDINFPSDLRKLSENDLQEVSNEVRKEMIDAVSETGGHLGAGLGVVELTVALHYVFDTPNDRLIWDVGHQTYPHKILTGRKSKIKTLRQGNGLSGFTKRSESEYDPFGAAHSSTSISSALGMAEANKLSNKLNNIIAVIGDGAISAGMAYEAMNNAGASKTKMIVILNDNDMSIAKPVGAMRTYLAKLLTGKIYFSLRETFKLIVSAFSKRFSVKAGKAEDFLRSAVTGGTLFNSLGFYYVGPIDGHDLSTLIPILKNARDSKHQGPIMIHIKTQKGKGYSYAEKASDHYHGVSKFNVVTGEQVKSGTNLPAYTKVFANTLVKHAERDSKVVGVTAAMPGGTGMDIFAKDFPKRMFDVGIAEQHAVTFAAGLATEGYKPYVAIYSTFLQRAYDQVVHDVAIQSLPVRFIIDRAGLVGADGSTHAGSFDITYLSTLPNFIVMAPSDEAELVKMTNTSMTINNKPCAIRYPRGNGIGVELPSIDENIEIGKGRVIQEGKQVCILSIGTRLEECKIAAAELKNKGIESTIVDARFAKPLDQELILKCAREHEAMITVEEGSIGGFGSHVENLLSEKGIFDKGLKFRTMILPDIFIEQDSPKKMYDVAGLNASQISKKILDILFTKESIKVVKN.

Residues H76 and 117–119 (AHS) contribute to the thiamine diphosphate site. A Mg(2+)-binding site is contributed by D148. Thiamine diphosphate contacts are provided by residues 149 to 150 (GA), N177, Y287, and E369. Position 177 (N177) interacts with Mg(2+).

It belongs to the transketolase family. DXPS subfamily. As to quaternary structure, homodimer. Mg(2+) serves as cofactor. The cofactor is thiamine diphosphate.

The enzyme catalyses D-glyceraldehyde 3-phosphate + pyruvate + H(+) = 1-deoxy-D-xylulose 5-phosphate + CO2. Its pathway is metabolic intermediate biosynthesis; 1-deoxy-D-xylulose 5-phosphate biosynthesis; 1-deoxy-D-xylulose 5-phosphate from D-glyceraldehyde 3-phosphate and pyruvate: step 1/1. Its function is as follows. Catalyzes the acyloin condensation reaction between C atoms 2 and 3 of pyruvate and glyceraldehyde 3-phosphate to yield 1-deoxy-D-xylulose-5-phosphate (DXP). The protein is 1-deoxy-D-xylulose-5-phosphate synthase of Pelagibacter ubique (strain HTCC1062).